We begin with the raw amino-acid sequence, 143 residues long: Deoxyuridine 5'-triphosphate nucleotidohydrolase (143 aa).

Residues 63-65 (RSG), N76, 80-82 (TID), and K90 each bind substrate.

It belongs to the dUTPase family. Mg(2+) serves as cofactor.

It catalyses the reaction dUTP + H2O = dUMP + diphosphate + H(+). The protein operates within pyrimidine metabolism; dUMP biosynthesis; dUMP from dCTP (dUTP route): step 2/2. Its function is as follows. This enzyme is involved in nucleotide metabolism: it produces dUMP, the immediate precursor of thymidine nucleotides and it decreases the intracellular concentration of dUTP so that uracil cannot be incorporated into DNA. The chain is Deoxyuridine 5'-triphosphate nucleotidohydrolase from Finegoldia magna (strain ATCC 29328 / DSM 20472 / WAL 2508) (Peptostreptococcus magnus).